The primary structure comprises 379 residues: Acyl-CoA dehydrogenase, short-chain specific (379 aa).

This sequence belongs to the acyl-CoA dehydrogenase family. Requires FAD as cofactor.

It carries out the reaction butanoyl-CoA + oxidized [electron-transfer flavoprotein] + H(+) = (2E)-butenoyl-CoA + reduced [electron-transfer flavoprotein]. It catalyses the reaction a short-chain 2,3-saturated fatty acyl-CoA + oxidized [electron-transfer flavoprotein] + H(+) = a short-chain (2E)-enoyl-CoA + reduced [electron-transfer flavoprotein]. It participates in lipid metabolism; butanoate metabolism. In Clostridium acetobutylicum (strain ATCC 824 / DSM 792 / JCM 1419 / IAM 19013 / LMG 5710 / NBRC 13948 / NRRL B-527 / VKM B-1787 / 2291 / W), this protein is Acyl-CoA dehydrogenase, short-chain specific (bcd).